The chain runs to 328 residues: Cytochrome c biogenesis protein CcsA (328 aa).

Transmembrane regions (helical) follow at residues 12-32 (HISF…LLLG), 45-65 (GMII…IFSG), 72-92 (LYES…VLCL), 100-120 (FNTI…SGLL), 145-165 (MILG…ILVI), 234-254 (TISL…VWAN), 263-283 (WDPK…YLHI), and 296-316 (IVAS…NLLG).

It belongs to the CcmF/CycK/Ccl1/NrfE/CcsA family. May interact with Ccs1.

It localises to the plastid. Its subcellular location is the chloroplast thylakoid membrane. Required during biogenesis of c-type cytochromes (cytochrome c6 and cytochrome f) at the step of heme attachment. The chain is Cytochrome c biogenesis protein CcsA from Phaseolus vulgaris (Kidney bean).